The following is a 569-amino-acid chain: Proline--tRNA ligase (569 aa).

It belongs to the class-II aminoacyl-tRNA synthetase family. ProS type 1 subfamily. In terms of assembly, homodimer.

The protein resides in the cytoplasm. The catalysed reaction is tRNA(Pro) + L-proline + ATP = L-prolyl-tRNA(Pro) + AMP + diphosphate. In terms of biological role, catalyzes the attachment of proline to tRNA(Pro) in a two-step reaction: proline is first activated by ATP to form Pro-AMP and then transferred to the acceptor end of tRNA(Pro). As ProRS can inadvertently accommodate and process non-cognate amino acids such as alanine and cysteine, to avoid such errors it has two additional distinct editing activities against alanine. One activity is designated as 'pretransfer' editing and involves the tRNA(Pro)-independent hydrolysis of activated Ala-AMP. The other activity is designated 'posttransfer' editing and involves deacylation of mischarged Ala-tRNA(Pro). The misacylated Cys-tRNA(Pro) is not edited by ProRS. This chain is Proline--tRNA ligase, found in Legionella pneumophila subsp. pneumophila (strain Philadelphia 1 / ATCC 33152 / DSM 7513).